Consider the following 207-residue polypeptide: MDNEKGLLIVLSGPSGVGKGTVRKRIFEDPSTSYKYSISMTTRQMREGEVDGVDYFFKTRDAFEALIKDDQFIEYAEYVGNYYGTPVQYVKDTMDEGHDVFLEIEVEGAKQVRKKFPDALFIFLAPPSLEHLRERLVGRGTESDEKIQSRINEARKEVEMMNLYDYVVVNDEVELAKNRIQCIVEAEHLKRERVEAKYRKMILEAKK.

Residues 6-185 (GLLIVLSGPS…AKNRIQCIVE (180 aa)) enclose the Guanylate kinase-like domain. 13–20 (GPSGVGKG) is a binding site for ATP.

It belongs to the guanylate kinase family.

The protein resides in the cytoplasm. The catalysed reaction is GMP + ATP = GDP + ADP. Functionally, essential for recycling GMP and indirectly, cGMP. This chain is Guanylate kinase, found in Staphylococcus aureus (strain USA300).